The following is a 297-amino-acid chain: tRNA-cytidine(32) 2-sulfurtransferase (297 aa).

The short motif at Ser45–Ser50 is the PP-loop motif element. Residues Cys120, Cys123, and Cys211 each contribute to the [4Fe-4S] cluster site.

It belongs to the TtcA family. Homodimer. The cofactor is Mg(2+). [4Fe-4S] cluster is required as a cofactor.

It is found in the cytoplasm. It catalyses the reaction cytidine(32) in tRNA + S-sulfanyl-L-cysteinyl-[cysteine desulfurase] + AH2 + ATP = 2-thiocytidine(32) in tRNA + L-cysteinyl-[cysteine desulfurase] + A + AMP + diphosphate + H(+). The protein operates within tRNA modification. In terms of biological role, catalyzes the ATP-dependent 2-thiolation of cytidine in position 32 of tRNA, to form 2-thiocytidine (s(2)C32). The sulfur atoms are provided by the cysteine/cysteine desulfurase (IscS) system. This Vibrio campbellii (strain ATCC BAA-1116) protein is tRNA-cytidine(32) 2-sulfurtransferase.